The primary structure comprises 56 residues: Bdellin B-3 (56 aa).

The Kazal-like domain occupies 1–42; it reads DTECVCTKELHRVCGSDGVTYDNECLATCHGASVAHDHACEG. 3 disulfide bridges follow: Cys-4/Cys-29, Cys-6/Cys-25, and Cys-14/Cys-40.

Its function is as follows. Proteinase inhibitor. Blocks the activity of trypsin, plasmin and sperm acrosin. The protein is Bdellin B-3 of Hirudo medicinalis (Medicinal leech).